The primary structure comprises 273 residues: Putative phosphoenolpyruvate synthase regulatory protein (273 aa).

154 to 161 (GVSRSGKT) is a binding site for ADP.

The protein belongs to the pyruvate, phosphate/water dikinase regulatory protein family. PSRP subfamily.

It catalyses the reaction [pyruvate, water dikinase] + ADP = [pyruvate, water dikinase]-phosphate + AMP + H(+). It carries out the reaction [pyruvate, water dikinase]-phosphate + phosphate + H(+) = [pyruvate, water dikinase] + diphosphate. Its function is as follows. Bifunctional serine/threonine kinase and phosphorylase involved in the regulation of the phosphoenolpyruvate synthase (PEPS) by catalyzing its phosphorylation/dephosphorylation. The sequence is that of Putative phosphoenolpyruvate synthase regulatory protein from Neisseria meningitidis serogroup B (strain ATCC BAA-335 / MC58).